Consider the following 247-residue polypeptide: tRNA pseudouridine synthase A (247 aa).

Asp-52 acts as the Nucleophile in catalysis. Tyr-113 contributes to the substrate binding site.

Belongs to the tRNA pseudouridine synthase TruA family. As to quaternary structure, homodimer.

The enzyme catalyses uridine(38/39/40) in tRNA = pseudouridine(38/39/40) in tRNA. Its function is as follows. Formation of pseudouridine at positions 38, 39 and 40 in the anticodon stem and loop of transfer RNAs. This chain is tRNA pseudouridine synthase A, found in Bartonella bacilliformis (strain ATCC 35685 / KC583 / Herrer 020/F12,63).